The chain runs to 573 residues: Solute carrier family 41 member 2 (573 aa).

Residues 1 to 162 (MTNSKGRSIT…KESSGIMALQ (162 aa)) lie on the Extracellular side of the membrane. Residues S136 and S137 each carry the phosphoserine modification. The chain crosses the membrane as a helical span at residues 163–183 (ILVPFLLAGFGTVSAGMVLDI). Over 184-195 (VQHWEVFRKVTE) the chain is Cytoplasmic. Residues 196 to 216 (VFILVPALLGLKGNLEMTLAS) form a helical membrane-spanning segment. The Extracellular segment spans residues 217–245 (RLSTAVNIGKMDSPIEKWNLIIGNLALKQ). A helical transmembrane segment spans residues 246-266 (VQATVVGFLAAVAAIILGWIP). Residues 267 to 282 (EGKYYLDHSILLCSSS) lie on the Cytoplasmic side of the membrane. The helical transmembrane segment at 283–303 (VATAFIASLLQGIIMVGVIVG) threads the bilayer. The Extracellular segment spans residues 304-313 (SKKTGINPDN). A helical transmembrane segment spans residues 314–334 (VATPIAASFGDLITLAILAWI). The Cytoplasmic portion of the chain corresponds to 335–347 (SQGLYSCLETYYY). A helical membrane pass occupies residues 348–368 (ISPLVGVFFLALTPIWIIIAA). Topologically, residues 369–376 (KHPATRTV) are extracellular. A helical transmembrane segment spans residues 377-397 (LHSGWEPVITAMVISSIGGLI). Residues 398–406 (LDTTVSDPN) are Cytoplasmic-facing. The chain crosses the membrane as a helical span at residues 407 to 427 (LVGIVVYTPVINGIGGNLVAI). The Extracellular segment spans residues 428-469 (QASRISTYLHLHSIPGELPDEPKGCYYPFRTFFGPGVNNKSA). Residues 470 to 490 (QVLLLLVIPGHLIFLYTIHLM) traverse the membrane as a helical segment. The Cytoplasmic portion of the chain corresponds to 491 to 498 (KSGHTSLT). Residues 499-519 (IIFIVVYLFAAVLQVFTLLWI) traverse the membrane as a helical segment. Topologically, residues 520 to 543 (ADWMVHHFWRKGKDPDSFSIPYLT) are extracellular. The chain crosses the membrane as a helical span at residues 544-564 (ALGDLLGTALLALSFHFLWLI). Residues 565 to 573 (GDRDGDVGD) are Cytoplasmic-facing.

It belongs to the SLC41A transporter family.

The protein localises to the cell membrane. It carries out the reaction Mg(2+)(in) = Mg(2+)(out). The catalysed reaction is Mn(2+)(in) = Mn(2+)(out). The enzyme catalyses Co(2+)(in) = Co(2+)(out). It catalyses the reaction Ni(2+)(in) = Ni(2+)(out). It carries out the reaction Fe(2+)(in) = Fe(2+)(out). Functionally, acts as a plasma-membrane magnesium transporter. Can also mediate the transport of other divalent metal cations in an order of Ba(2+) &gt; Ni(2+) &gt; Co(2+) &gt; Fe(2+) &gt; Mn(2+). This chain is Solute carrier family 41 member 2 (SLC41A2), found in Macaca fascicularis (Crab-eating macaque).